Reading from the N-terminus, the 409-residue chain is MRSDDLYITTVPCFFKCPISLDVMKSPVSLSTGVTYDRVSIQRWLDDGNNTCPATMQILQNKEFVPNLTLHRLIDHWSDSINRRADSESPESDTPTRDEINAAIERFRIENDARSKILRFARESDENREFLAGKDDFVAMLVDLISDSRNFSDSQLLLVGEAVKILSMIRRKIFDRRRLSNLILTNGGDCLTSFFLLIKRGNPKLKIDCSAVLEFIAVDAESKLIIAKGEGLVTEIIKLISSDSDSSLIEANLSLLIAIASSKRVKLALIREKLVTKLTSLLTDPTTSVSVTEKCLKLLEAISSCKEGRSEICDGVCVETVVNKLMKVSTAATEHAVTVLWSVCYLFKEKKAQDAVIRINGVTKILLLLQSNCSLTVRHMLTDLLKVFKVNSRSCLSVYETKTTHIMPF.

In terms of domain architecture, U-box spans 10–84 (TVPCFFKCPI…DHWSDSINRR (75 aa)). 3 ARM repeats span residues 178–218 (RLSN…FIAV), 219–261 (DAES…AIAS), and 263–304 (KRVK…AISS).

It catalyses the reaction S-ubiquitinyl-[E2 ubiquitin-conjugating enzyme]-L-cysteine + [acceptor protein]-L-lysine = [E2 ubiquitin-conjugating enzyme]-L-cysteine + N(6)-ubiquitinyl-[acceptor protein]-L-lysine.. The protein operates within protein modification; protein ubiquitination. Functions as an E3 ubiquitin ligase. This Arabidopsis thaliana (Mouse-ear cress) protein is U-box domain-containing protein 28 (PUB28).